A 195-amino-acid chain; its full sequence is Small ribosomal subunit protein uS4c (195 aa).

In terms of domain architecture, S4 RNA-binding spans M82–N143.

The protein belongs to the universal ribosomal protein uS4 family. As to quaternary structure, part of the 30S ribosomal subunit. Contacts protein S5. The interaction surface between S4 and S5 is involved in control of translational fidelity.

It localises to the plastid. It is found in the chloroplast. Functionally, one of the primary rRNA binding proteins, it binds directly to 16S rRNA where it nucleates assembly of the body of the 30S subunit. With S5 and S12 plays an important role in translational accuracy. The sequence is that of Small ribosomal subunit protein uS4c (rps4) from Watsonia angusta.